A 281-amino-acid chain; its full sequence is MEANTRSTGRLPAAFLTPGSSSFMDFLSDHQPELLPGKRQLPPTQGVIEAPHGTTIVAVTFPGGVVLAGDRRATMGNMIAQRDIEKVFPADEYSAVGIAGTAGLAVEMVKLFQLELEHFEKVEGAQLSLEGKANRLSTMIRSNLGMAMQGLAVVPLFAGYDVDRNRGRIFSYDVTGGRSEESGYAATGSGSIFARGAMKKLFRADLSEADATTLVVQALYDAADDDSATGGPDVARRIYPIVTVITEDGFRRLTDEESSEIARSILERRLEQPDGPRAALL.

Positions 1 to 53 (MEANTRSTGRLPAAFLTPGSSSFMDFLSDHQPELLPGKRQLPPTQGVIEAPHG) are cleaved as a propeptide — removed in mature form; by autocatalysis. T54 functions as the Nucleophile in the catalytic mechanism.

It belongs to the peptidase T1B family. As to quaternary structure, the 20S proteasome core is composed of 14 alpha and 14 beta subunits that assemble into four stacked heptameric rings, resulting in a barrel-shaped structure. The two inner rings, each composed of seven catalytic beta subunits, are sandwiched by two outer rings, each composed of seven alpha subunits. The catalytic chamber with the active sites is on the inside of the barrel. Has a gated structure, the ends of the cylinder being occluded by the N-termini of the alpha-subunits. Is capped by the proteasome-associated ATPase, ARC.

Its subcellular location is the cytoplasm. It carries out the reaction Cleavage of peptide bonds with very broad specificity.. It participates in protein degradation; proteasomal Pup-dependent pathway. With respect to regulation, the formation of the proteasomal ATPase ARC-20S proteasome complex, likely via the docking of the C-termini of ARC into the intersubunit pockets in the alpha-rings, may trigger opening of the gate for substrate entry. Interconversion between the open-gate and close-gate conformations leads to a dynamic regulation of the 20S proteasome proteolysis activity. Component of the proteasome core, a large protease complex with broad specificity involved in protein degradation. The sequence is that of Proteasome subunit beta from Streptomyces scabiei (strain 87.22).